Reading from the N-terminus, the 147-residue chain is Hemoglobin subunit beta-3 (147 aa).

A Globin domain is found at 2 to 147 (EWTDAERTAI…VTSALSRQYH (146 aa)). Residues histidine 63 and histidine 92 each coordinate heme b.

It belongs to the globin family. As to quaternary structure, heterotetramer of two alpha chains and two beta chains. Red blood cells.

Its function is as follows. Involved in oxygen transport from gills to the various peripheral tissues. The protein is Hemoglobin subunit beta-3 (hbb3) of Muraena helena (Mediterranean moray).